The sequence spans 599 residues: Elongation factor 4 (599 aa).

The tr-type G domain occupies 2-184 (KNIRNFSIIA…RLVRDIPPPE (183 aa)). GTP-binding positions include 14 to 19 (DHGKST) and 131 to 134 (NKID).

This sequence belongs to the TRAFAC class translation factor GTPase superfamily. Classic translation factor GTPase family. LepA subfamily.

The protein localises to the cell inner membrane. The catalysed reaction is GTP + H2O = GDP + phosphate + H(+). In terms of biological role, required for accurate and efficient protein synthesis under certain stress conditions. May act as a fidelity factor of the translation reaction, by catalyzing a one-codon backward translocation of tRNAs on improperly translocated ribosomes. Back-translocation proceeds from a post-translocation (POST) complex to a pre-translocation (PRE) complex, thus giving elongation factor G a second chance to translocate the tRNAs correctly. Binds to ribosomes in a GTP-dependent manner. This is Elongation factor 4 from Escherichia coli O8 (strain IAI1).